The primary structure comprises 328 residues: Cytochrome c biogenesis protein CcsA (328 aa).

Helical transmembrane passes span 13–33 (ISFSVVSIVLTIYFLTLLVNL), 46–66 (GIIITFFGITGLLLTRWIYSG), 73–93 (LYESLIFLSWAFSIIHMVSYF), 101–121 (LNTITAPSVIFIQGFATSGLL), 146–166 (MILGYGALLCGSLLSIALLVI), 234–254 (IISLGFIFLTVGILSGAVWAN), 263–283 (WDPKETWAFITWTIFAIYLHI), and 295–315 (AIVALIGFILIWICYFGVNLL).

This sequence belongs to the CcmF/CycK/Ccl1/NrfE/CcsA family. As to quaternary structure, may interact with Ccs1.

It is found in the plastid. The protein resides in the chloroplast thylakoid membrane. In terms of biological role, required during biogenesis of c-type cytochromes (cytochrome c6 and cytochrome f) at the step of heme attachment. This chain is Cytochrome c biogenesis protein CcsA, found in Arabidopsis thaliana (Mouse-ear cress).